The primary structure comprises 305 residues: Homoserine O-acetyltransferase (305 aa).

Cys142 serves as the catalytic Acyl-thioester intermediate. Residues Lys163 and Ser192 each coordinate substrate. His235 acts as the Proton acceptor in catalysis. Glu237 is an active-site residue. Arg249 lines the substrate pocket.

This sequence belongs to the MetA family.

It localises to the cytoplasm. The enzyme catalyses L-homoserine + acetyl-CoA = O-acetyl-L-homoserine + CoA. It functions in the pathway amino-acid biosynthesis; L-methionine biosynthesis via de novo pathway; O-acetyl-L-homoserine from L-homoserine: step 1/1. Its function is as follows. Transfers an acetyl group from acetyl-CoA to L-homoserine, forming acetyl-L-homoserine. This Cereibacter sphaeroides (strain KD131 / KCTC 12085) (Rhodobacter sphaeroides) protein is Homoserine O-acetyltransferase.